Consider the following 1053-residue polypeptide: Putative ABC transporter C family member 15 (1053 aa).

One can recognise an ABC transmembrane type-1 1 domain in the interval 1–180 (MSVDVQRITD…LPDLLSALVQ (180 aa)). 4 helical membrane passes run 11–31 (FIWY…AIYI), 36–56 (LGLG…CNYP), 125–145 (FILW…CMLM), and 151–171 (AGAV…IFGL). Residues 214 to 437 (VEIENGAFSW…NIGFEVLTQC (224 aa)) form the ABC transporter 1 domain. 249-256 (GAVGSGKS) provides a ligand contact to ATP. 5 helical membrane-spanning segments follow: residues 481-503 (LLVP…SNYW), 523-543 (ILLV…ARTI), 595-615 (MAVK…TIFV), 714-734 (LSHF…EGVI), and 738-758 (IAGL…TVIW). The ABC transmembrane type-1 2 domain maps to 483 to 765 (VPFIILAQSC…VIWNICNAEN (283 aa)). The region spanning 804 to 1036 (FRDLQVRYAE…EDSFFSKLIK (233 aa)) is the ABC transporter 2 domain. 836-843 (GRTGSGKS) is a binding site for ATP.

The protein belongs to the ABC transporter superfamily. ABCC family. Conjugate transporter (TC 3.A.1.208) subfamily.

The protein resides in the membrane. The catalysed reaction is ATP + H2O + xenobioticSide 1 = ADP + phosphate + xenobioticSide 2.. In terms of biological role, pump for glutathione S-conjugates. The sequence is that of Putative ABC transporter C family member 15 (ABCC15) from Arabidopsis thaliana (Mouse-ear cress).